The chain runs to 200 residues: GTP cyclohydrolase-2 (200 aa).

Residue 49-53 (RIHSE) coordinates GTP. 3 residues coordinate Zn(2+): Cys54, Cys65, and Cys67. Residues Gln70, 92–94 (EGR), and Thr114 each bind GTP. Asp126 (proton acceptor) is an active-site residue. The active-site Nucleophile is Arg128. Residues Thr149 and Lys154 each contribute to the GTP site.

This sequence belongs to the GTP cyclohydrolase II family. Requires Zn(2+) as cofactor.

The catalysed reaction is GTP + 4 H2O = 2,5-diamino-6-hydroxy-4-(5-phosphoribosylamino)-pyrimidine + formate + 2 phosphate + 3 H(+). Its pathway is cofactor biosynthesis; riboflavin biosynthesis; 5-amino-6-(D-ribitylamino)uracil from GTP: step 1/4. Its function is as follows. Catalyzes the conversion of GTP to 2,5-diamino-6-ribosylamino-4(3H)-pyrimidinone 5'-phosphate (DARP), formate and pyrophosphate. This is GTP cyclohydrolase-2 from Saccharophagus degradans (strain 2-40 / ATCC 43961 / DSM 17024).